Here is a 596-residue protein sequence, read N- to C-terminus: (E)-beta-ocimene synthase, chloroplastic (596 aa).

The transit peptide at 1–35 (MAITHYQMASFQSSFHFCMLRKTLRQKSSLHFAKR) directs the protein to the chloroplast. (2E)-geranyl diphosphate contacts are provided by Arg-307, Asp-344, Asp-348, Arg-485, and Asn-488. Mg(2+)-binding residues include Asp-344 and Asp-348. A DDXXD motif motif is present at residues 344–348 (DDIYD). Mg(2+) contacts are provided by Asn-488, Ala-492, and Glu-496.

It belongs to the terpene synthase family. Tpsb subfamily. It depends on Mg(2+) as a cofactor. Mn(2+) is required as a cofactor. Highly expressed in leaves, stems and disk florets. Detected in roots.

Its subcellular location is the plastid. It localises to the chloroplast. It catalyses the reaction (2E)-geranyl diphosphate = (E)-beta-ocimene + diphosphate. It participates in secondary metabolite biosynthesis; terpenoid biosynthesis. Its function is as follows. Monoterpene synthase involved in the biosynthesis of (E)-beta-ocimene as the major product and trace amounts of (Z)-beta-ocimene. Can only accept geranyl diphosphate as substrate. This Matricaria chamomilla var. recutita (German chamomile) protein is (E)-beta-ocimene synthase, chloroplastic.